Here is a 260-residue protein sequence, read N- to C-terminus: Snake venom serine proteinase 12 (260 aa).

An N-terminal signal peptide occupies residues 1–18; sequence MVLIRVLANLLILQLSYA. The propeptide occupies 19-24; that stretch reads QKSSEL. In terms of domain architecture, Peptidase S1 spans 25–251; the sequence is VIGGDECNIN…HLDWIQSIIA (227 aa). 6 disulfide bridges follow: C31–C163, C50–C66, C98–C258, C142–C212, C174–C191, and C202–C227. The active-site Charge relay system is H65. N103 carries N-linked (GlcNAc...) asparagine glycosylation. D110 serves as the catalytic Charge relay system. The active-site Charge relay system is S206.

Belongs to the peptidase S1 family. Snake venom subfamily. Monomer. As to expression, expressed by the venom gland.

The protein localises to the secreted. Snake venom serine protease that may act in the hemostasis system of the prey. In Crotalus adamanteus (Eastern diamondback rattlesnake), this protein is Snake venom serine proteinase 12.